Here is a 503-residue protein sequence, read N- to C-terminus: SusD-like protein P38 (503 aa).

The first 21 residues, 1–21 (MKKFKNISITFLILISLGVLN), serve as a signal peptide directing secretion.

The protein belongs to the SusD family.

The protein resides in the cell outer membrane. Its function is as follows. Polysaccharide-binding protein probably involved in ulvan degradation. Ulvan is the main polysaccharide component of the Ulvales (green seaweed) cell wall. It is composed of disaccharide building blocks comprising 3-sulfated rhamnose (Rha3S) linked to D-glucuronic acid (GlcA), L-iduronic acid (IduA), or D-xylose (Xyl). The SusD-like protein may mediate ulvan oligomer-binding before transport in the periplasm for further degradation. The chain is SusD-like protein P38 from Formosa agariphila (strain DSM 15362 / KCTC 12365 / LMG 23005 / KMM 3901 / M-2Alg 35-1).